The sequence spans 121 residues: ETRYEKFLRQHVDHPRTLGLMGHRYCAVMLARRQVTAPGRPCKPSNTFVHAPAEDLVATCTRPADATGFHSTSTPMDITACRLRGGDTRPPCNYRARQLHHHVRVSCLDGLPVHLAGTHAS.

Lysine 6 and arginine 9 together coordinate substrate. Histidine 11 serves as the catalytic Proton acceptor. Cystine bridges form between cysteine 26–cysteine 81, cysteine 42–cysteine 92, and cysteine 60–cysteine 107. Residues 43–47 (KPSNT) and arginine 82 each bind substrate. Catalysis depends on histidine 114, which acts as the Proton donor.

It belongs to the pancreatic ribonuclease family.

It localises to the secreted. Pyrimidine-specific nuclease with preference for C. The chain is Ribonuclease CL2 from Gallus gallus (Chicken).